A 622-amino-acid polypeptide reads, in one-letter code: MPPTQAESVIKNIIREIGQECAAHGEIASETVVAFMVKAVVLDPSNGFNMDRTLIKTDVQKLVKLCVARLLDNKNPSLDTIKMQVYFDMNYTSREDFLEEHHRVLESRLGIVSREITDNRASAREELENLYRKIVSYVLLRSGLGSPTDIKIVREATAALQSVFPQAELATFLTLSKKDKERQLKELTMIVTGIRLFNRDCGKGGEGIDDLPAILHEAIPTTTQHIDSQLQIAQDQAFRYTAILEKVTNNPLMAKELQPYMLKEALYNVRQYEIFLQTVLSDIITCAEEVEMMIKQLAAQLEQLKMAVKSKTAVPTSQVFPIFVALASLWMSFQDETVLISVLSNLTTNLELFLGTHELLFPEKVMLGLLDGVVVKSDLTRIEEHMEERVELADFRTQEWLFPETTANFNKLLIQYRGFCGYTFAVTDGLLLPGNPAIGILKYKEKYYTFSTRDAAYTFAENPDHYIHLIKEKAKKNAELIQLLELHQQFETLIPYSQMRDVDKHYIKPITKCDNGTQTDTHILPPTTMRTYEWNEWELRRKAIKLANLRQKITHSVQTDLSHMRRDNTSQVYPLKEASTQSKREGSSRVPRPQIFIAGLRGGQSKTTYGVKVNLTRAVDET.

The tract at residues Asn-568 to Pro-593 is disordered.

Belongs to the CFAP206 family. In terms of tissue distribution, expressed in the sperm, oviduct, lung, nasal cavity, brain ependyma and choroid plexus.

The protein localises to the cytoplasm. It is found in the cytoskeleton. Its subcellular location is the cilium axoneme. The protein resides in the cilium basal body. Its function is as follows. Essential for sperm motility and is involved in the regulation of the beating frequency of motile cilia on the epithelial cells of the respiratory tract. Required for the establishment of radial spokes in sperm flagella. The protein is Cilia- and flagella-associated protein 206 of Mus musculus (Mouse).